Consider the following 395-residue polypeptide: MPRVIYFDCFSGISGDMALGALLDAGLSLDALREALRRLNVDGWDLNAMREVRGPLAGTRAHVIAPEGHVHRTLDDIRAIISTSSLPAAVIERSMRIFAILAEAEAQVHGTTVDRIHFHEVGALDAIVDIVGVAAGLDLLGVEQVFASPLPLGAGWVRSAHGPLPIPSPATLAILASVGAPITPDETPFELTTPTGAAILAALATFRRPSMRLCAIGYGFGARQMERPNALRVWLGDPDEEEDASRQRGLVLLETNIDDQPAEQIAYATDVLRAAGALDVWCTPILMKKGRPGVQLSALVTADLEDTAVSLLMCETTTLGVRRRTVERHVCDRDIVEIATPLGVARVKRKRWRGELIGAAPEYEDCARIAREHGVPLAAVYQMVMGRLENGATKC.

The protein belongs to the LarC family.

The chain is Putative nickel insertion protein from Roseiflexus castenholzii (strain DSM 13941 / HLO8).